The sequence spans 463 residues: L-seryl-tRNA(Sec) selenium transferase (463 aa).

Residue K295 is modified to N6-(pyridoxal phosphate)lysine.

The protein belongs to the SelA family. As to quaternary structure, homodecamer; pentamer of dimers. Binds only one seryl-tRNA(Sec) per dimer. It depends on pyridoxal 5'-phosphate as a cofactor.

The protein localises to the cytoplasm. It catalyses the reaction L-seryl-tRNA(Sec) + selenophosphate + H(+) = L-selenocysteinyl-tRNA(Sec) + phosphate. Its pathway is aminoacyl-tRNA biosynthesis; selenocysteinyl-tRNA(Sec) biosynthesis; selenocysteinyl-tRNA(Sec) from L-seryl-tRNA(Sec) (bacterial route): step 1/1. Converts seryl-tRNA(Sec) to selenocysteinyl-tRNA(Sec) required for selenoprotein biosynthesis. The sequence is that of L-seryl-tRNA(Sec) selenium transferase from Salmonella paratyphi A (strain AKU_12601).